The primary structure comprises 149 residues: DnaJ homolog subfamily C member 24 (149 aa).

Residues 11 to 82 (DWYSILGADP…ETKKEYDLQR (72 aa)) form the J domain. A DPH-type MB domain is found at 93-148 (VDARIYLEEMSWNEDDHSFSLSCRCGGKYSVSKDEAEEVTLISCDTCSLIIELLHY). Zn(2+) is bound by residues C115, C117, C136, and C139.

It belongs to the DPH4 family. As to quaternary structure, monomer and homooligomer. Iron binding promotes oligomerization.

It localises to the cytoplasm. Its subcellular location is the cytoskeleton. It functions in the pathway protein modification; peptidyl-diphthamide biosynthesis. Its function is as follows. Stimulates the ATPase activity of several Hsp70-type chaperones. This ability is enhanced by iron-binding. The iron-bound form is redox-active and can function as electron carrier. Plays a role in the diphthamide biosynthesis, a post-translational modification of histidine which occurs in translation elongation factor 2 (EEF2). This Bos taurus (Bovine) protein is DnaJ homolog subfamily C member 24 (DNAJC24).